The sequence spans 150 residues: MRIVLQVVSRASVTVAEETVGEIEGPGLLALVGLTHTDTPETVSRLAGKVAGLRILPGETSCADGPSPVLAVSQFTLYGDVRKGRRPSWSRAAPGQQSEPLFEAFVAALRERGIPVRTGRFGAHMEVSLVNDGPVTVLVDSDELDRPRRG.

The Gly-cisPro motif, important for rejection of L-amino acids motif lies at 133–134 (GP).

It belongs to the DTD family. Homodimer.

The protein resides in the cytoplasm. The catalysed reaction is glycyl-tRNA(Ala) + H2O = tRNA(Ala) + glycine + H(+). The enzyme catalyses a D-aminoacyl-tRNA + H2O = a tRNA + a D-alpha-amino acid + H(+). Functionally, an aminoacyl-tRNA editing enzyme that deacylates mischarged D-aminoacyl-tRNAs. Also deacylates mischarged glycyl-tRNA(Ala), protecting cells against glycine mischarging by AlaRS. Acts via tRNA-based rather than protein-based catalysis; rejects L-amino acids rather than detecting D-amino acids in the active site. By recycling D-aminoacyl-tRNA to D-amino acids and free tRNA molecules, this enzyme counteracts the toxicity associated with the formation of D-aminoacyl-tRNA entities in vivo and helps enforce protein L-homochirality. This chain is D-aminoacyl-tRNA deacylase, found in Kocuria rhizophila (strain ATCC 9341 / DSM 348 / NBRC 103217 / DC2201).